The sequence spans 239 residues: Ribosomal RNA small subunit methyltransferase G (239 aa).

Residues G79, F84, 130–131 (AE), and R149 each bind S-adenosyl-L-methionine.

It belongs to the methyltransferase superfamily. RNA methyltransferase RsmG family.

It localises to the cytoplasm. In terms of biological role, specifically methylates the N7 position of a guanine in 16S rRNA. The chain is Ribosomal RNA small subunit methyltransferase G from Lactobacillus delbrueckii subsp. bulgaricus (strain ATCC BAA-365 / Lb-18).